Consider the following 885-residue polypeptide: High affinity cAMP-specific and IBMX-insensitive 3',5'-cyclic phosphodiesterase 8B (885 aa).

Disordered regions lie at residues 18-41 (RDSDESSSPRQTTSVSQGPAAPLP) and 72-95 (TELGSGSSAGSAAPAATTSRGRRR). The span at 23–34 (SSSPRQTTSVSQ) shows a compositional bias: polar residues. A compositionally biased stretch (low complexity) spans 75–90 (GSGSSAGSAAPAATTS). One can recognise a PAS domain in the interval 267–338 (ACNSVFTALD…DTINTCIKKG (72 aa)). The tract at residues 393-436 (IHRDSGDNSQTEPHSFRYKNRRKESIDVKSISSRGSDAPSLQNR) is disordered. Residues 422–436 (SISSRGSDAPSLQNR) show a composition bias toward polar residues. S517 is subject to Phosphoserine. The 337-residue stretch at 539–875 (TINDVPPCIS…KHWKTLDDLK (337 aa)) folds into the PDEase domain. H615 (proton donor) is an active-site residue. A divalent metal cation is bound by residues H619, H655, and D656. S754 carries the phosphoserine modification. Position 781 (D781) interacts with a divalent metal cation.

This sequence belongs to the cyclic nucleotide phosphodiesterase family. PDE8 subfamily. A divalent metal cation serves as cofactor. Abundantly expressed in the thyroid. Also very weakly expressed in brain, spinal cord and placenta. In the thyroid isoform 1 predominates, and isoforms 2 and 6 are also highly expressed. In the placenta isoforms 1 and 2 are expressed equally. In the brain isoform 2 predominates.

The catalysed reaction is 3',5'-cyclic AMP + H2O = AMP + H(+). It participates in purine metabolism; 3',5'-cyclic AMP degradation; AMP from 3',5'-cyclic AMP: step 1/1. Inhibited by dipyridimole. Insensitive to selective PDE inhibitors including rolipram and milrinone as well as to the non-selective inhibitor, IBMX. Unaffected by cGMP. Functionally, hydrolyzes the second messenger cAMP, which is a key regulator of many important physiological processes. May be involved in specific signaling in the thyroid gland. The protein is High affinity cAMP-specific and IBMX-insensitive 3',5'-cyclic phosphodiesterase 8B (PDE8B) of Homo sapiens (Human).